The sequence spans 949 residues: Nonsense-mediated mRNA decay factor SMG8 (949 aa).

3 disordered regions span residues serine 564–threonine 607, asparagine 624–asparagine 652, and proline 748–tryptophan 768. Residues glutamate 571–valine 581 show a composition bias toward acidic residues. Residues asparagine 594–threonine 607 show a composition bias toward polar residues. Positions asparagine 624 to alanine 648 are enriched in low complexity. Positions lysine 749–tryptophan 768 are enriched in basic residues.

Belongs to the SMG8 family.

Functionally, involved in nonsense-mediated decay (NMD) of mRNAs containing premature stop codons. Probable component of kinase complex containing nonC and recruited to stalled ribosomes. The protein is Nonsense-mediated mRNA decay factor SMG8 of Drosophila erecta (Fruit fly).